A 70-amino-acid chain; its full sequence is Large ribosomal subunit protein uL29 (70 aa).

The protein belongs to the universal ribosomal protein uL29 family.

This Methanocaldococcus jannaschii (strain ATCC 43067 / DSM 2661 / JAL-1 / JCM 10045 / NBRC 100440) (Methanococcus jannaschii) protein is Large ribosomal subunit protein uL29 (rpl29).